The sequence spans 210 residues: LexA repressor (210 aa).

The H-T-H motif DNA-binding region spans 31-51 (RAEISRELGFRSPNAAEEHLK). Catalysis depends on for autocatalytic cleavage activity residues Ser-126 and Lys-163.

Belongs to the peptidase S24 family. As to quaternary structure, homodimer.

The catalysed reaction is Hydrolysis of Ala-|-Gly bond in repressor LexA.. Functionally, represses a number of genes involved in the response to DNA damage (SOS response), including recA and lexA. In the presence of single-stranded DNA, RecA interacts with LexA causing an autocatalytic cleavage which disrupts the DNA-binding part of LexA, leading to derepression of the SOS regulon and eventually DNA repair. The chain is LexA repressor from Actinobacillus succinogenes (strain ATCC 55618 / DSM 22257 / CCUG 43843 / 130Z).